Reading from the N-terminus, the 444-residue chain is UDP-N-acetylmuramate--L-alanine ligase (444 aa).

110 to 116 (GAHGKTS) lines the ATP pocket.

It belongs to the MurCDEF family.

Its subcellular location is the cytoplasm. The catalysed reaction is UDP-N-acetyl-alpha-D-muramate + L-alanine + ATP = UDP-N-acetyl-alpha-D-muramoyl-L-alanine + ADP + phosphate + H(+). It functions in the pathway cell wall biogenesis; peptidoglycan biosynthesis. In terms of biological role, cell wall formation. In Streptococcus pneumoniae (strain P1031), this protein is UDP-N-acetylmuramate--L-alanine ligase.